A 218-amino-acid polypeptide reads, in one-letter code: Small ribosomal subunit protein uS3c (218 aa).

Residues 47-118 enclose the KH type-2 domain; that stretch reads VQKNIRISSG…KLNIAITRIS (72 aa).

Belongs to the universal ribosomal protein uS3 family. Part of the 30S ribosomal subunit.

It is found in the plastid. Its subcellular location is the chloroplast. This is Small ribosomal subunit protein uS3c (rps3) from Aethionema cordifolium (Lebanon stonecress).